Here is an 83-residue protein sequence, read N- to C-terminus: Retinal cone rhodopsin-sensitive cGMP 3',5'-cyclic phosphodiesterase subunit gamma (83 aa).

Residues 1–19 (MSDNTTLAPPAASQAPATP) are compositionally biased toward low complexity. The segment at 1–51 (MSDNTTLAPPAASQAPATPRKGPPKFKQRQTRQFKSKPPKKGVKGFGDDIP) is disordered. Positions 22–43 (GPPKFKQRQTRQFKSKPPKKGV) are enriched in basic residues.

The protein belongs to the rod/cone cGMP-PDE gamma subunit family. Tetramer composed of two catalytic chains (alpha and beta), and two inhibitory chains (gamma).

It catalyses the reaction 3',5'-cyclic GMP + H2O = GMP + H(+). Its function is as follows. Participates in processes of transmission and amplification of the visual signal. cGMP-PDEs are the effector molecules in G-protein-mediated phototransduction in vertebrate rods and cones. This Ictidomys tridecemlineatus (Thirteen-lined ground squirrel) protein is Retinal cone rhodopsin-sensitive cGMP 3',5'-cyclic phosphodiesterase subunit gamma (PDE6H).